The sequence spans 630 residues: Pro-interleukin-16 (630 aa).

2 disordered regions span residues 30 to 268 and 316 to 343; these read ENPG…FPLT and PKEG…ASDT. Over residues 129–143 the composition is skewed to low complexity; it reads IRASSSSSIKQRISS. Ser220 is modified (phosphoserine). Positions 321-343 are enriched in polar residues; it reads SPTSSSNEDSAANGSAETSASDT. Positions 404 to 500 are interaction with PPP1R12A, PPP1R12B and PPP1R12C; sequence KQLDSIHVTI…IVTRKLTAES (97 aa). 2 consecutive PDZ domains span residues 410 to 495 and 532 to 617; these read HVTI…VTRK and TVTL…IRRK.

As to quaternary structure, homotetramer. Pro-interleukin-16 interacts (via PDZ 2 domain) with PPP1R12A, PPP1R12B and PPP1R12C. Pro-interleukin-16 interacts with GRIN2A. Pro-interleukin-16 interacts with GABPB1. Pro-interleukin-16 interacts (via PDZ 3 domain) with HDAC3.

It localises to the secreted. Its subcellular location is the cytoplasm. The protein resides in the nucleus. Functionally, interleukin-16 stimulates a migratory response in CD4+ lymphocytes, monocytes, and eosinophils. Primes CD4+ T-cells for IL-2 and IL-15 responsiveness. Also induces T-lymphocyte expression of interleukin 2 receptor. Ligand for CD4. In terms of biological role, pro-interleukin-16 is involved in cell cycle progression in T-cells. Appears to be involved in transcriptional regulation of SKP2 and is probably part of a transcriptional repression complex on the core promoter of the SKP2 gene. May act as a scaffold for GABPB1 (the DNA-binding subunit the GABP transcription factor complex) and HDAC3 thus maintaining transcriptional repression and blocking cell cycle progression in resting T-cells. The sequence is that of Pro-interleukin-16 (IL16) from Macaca mulatta (Rhesus macaque).